Here is a 406-residue protein sequence, read N- to C-terminus: Calreticulin (406 aa).

Positions 1 to 17 (MMWCKTVIVLLATVGFI) are cleaved as a signal peptide. A disulfide bridge links C105 with C137. 4 residues coordinate an alpha-D-glucoside: Y109, K111, Y128, and D135. A run of 7 repeats spans residues 191–202 (VESGNLEDDWDF), 210–221 (DPTATKPEDWDD), 227–238 (DPDDKKPEDWDK), 244–255 (DPDATKPEDWDD), 259–269 (GEWEPPMIDNP), 273–283 (GEWQPKQLDNP), and 287–297 (GAWEHPEIANP). The segment at 191-255 (VESGNLEDDW…DATKPEDWDD (65 aa)) is 4 X approximate repeats. Basic and acidic residues predominate over residues 207 to 251 (KIKDPTATKPEDWDDRATIPDPDDKKPEDWDKPEHIPDPDATKPE). The tract at residues 207-259 (KIKDPTATKPEDWDDRATIPDPDDKKPEDWDKPEHIPDPDATKPEDWDDEMDG) is disordered. The interval 259-297 (GEWEPPMIDNPEFKGEWQPKQLDNPNYKGAWEHPEIANP) is 3 X approximate repeats. D317 contributes to the an alpha-D-glucoside binding site. A disordered region spans residues 347–406 (KNTQAGEKKMKEAQDEVQRKKDEEEAKKASDKDDEDEDDDDEEKDDESKQDKDQSEHDEL). The segment covering 352–377 (GEKKMKEAQDEVQRKKDEEEAKKASD) has biased composition (basic and acidic residues). A compositionally biased stretch (acidic residues) spans 378 to 391 (KDDEDEDDDDEEKD). Over residues 392–406 (DESKQDKDQSEHDEL) the composition is skewed to basic and acidic residues.

Belongs to the calreticulin family.

It is found in the endoplasmic reticulum lumen. Molecular calcium-binding chaperone promoting folding, oligomeric assembly and quality control in the ER via the calreticulin/calnexin cycle. This lectin may interact transiently with almost all of the monoglucosylated glycoproteins that are synthesized in the ER. The sequence is that of Calreticulin from Drosophila melanogaster (Fruit fly).